The following is a 332-amino-acid chain: Ubiquinone biosynthesis protein COQ4, mitochondrial (332 aa).

Residues methionine 1 to phenylalanine 24 constitute a mitochondrion transit peptide. Positions 210, 211, 214, and 226 each coordinate Zn(2+).

Belongs to the COQ4 family. As to quaternary structure, component of a multi-subunit COQ enzyme complex, composed of at least COQ3, COQ4, COQ5, COQ6, COQ7 and COQ9. It depends on Zn(2+) as a cofactor.

The protein resides in the mitochondrion inner membrane. It carries out the reaction a 4-hydroxy-3-methoxy-5-(all-trans-polyprenyl)benzoate + H(+) = a 2-methoxy-6-(all-trans-polyprenyl)phenol + CO2. Its pathway is cofactor biosynthesis; ubiquinone biosynthesis. In terms of biological role, lyase that catalyzes the C1-decarboxylation of 4-hydroxy-3-methoxy-5-(all-trans-polyprenyl)benzoic acid into 2-methoxy-6-(all-trans-polyprenyl)phenol during ubiquinone biosynthesis. The chain is Ubiquinone biosynthesis protein COQ4, mitochondrial from Zygosaccharomyces rouxii (strain ATCC 2623 / CBS 732 / NBRC 1130 / NCYC 568 / NRRL Y-229).